The sequence spans 156 residues: Endogenous retrovirus group K member 6 Pro protein (156 aa).

Residues 21–96 (FEGLVDTGAD…IPLNLWGRDL (76 aa)) form the Peptidase A2 domain. Asp26 is a catalytic residue. The G-patch domain maps to 111 to 156 (YSPTSQKIMTKMGYIPGKGLGKNEDGIKIPVEAKINQEREGIGNPC).

This sequence belongs to the peptidase A2 family. HERV class-II K(HML-2) subfamily. In terms of assembly, active as a homodimer. In terms of processing, autoproteolytically processed at the N-terminus. Expected C-terminal autoprocessing not detected. The sequence shown is that of the processed Pro protein.

The catalysed reaction is Processing at the authentic HIV-1 PR recognition site and release of the mature p17 matrix and the p24 capsid protein, as a result of the cleavage of the -SQNY-|-PIVQ- cleavage site.. Functionally, retroviral proteases have roles in the processing of the primary translation products and the maturation of the viral particle. Endogenous Pro proteins may have kept, lost or modified their original function during evolution. In Homo sapiens (Human), this protein is Endogenous retrovirus group K member 6 Pro protein (ERVK-6).